Reading from the N-terminus, the 112-residue chain is Large ribosomal subunit protein mL53 (112 aa).

Belongs to the mitochondrion-specific ribosomal protein mL53 family. Component of the mitochondrial large ribosomal subunit (mt-LSU). Mature mammalian 55S mitochondrial ribosomes consist of a small (28S) and a large (39S) subunit. The 28S small subunit contains a 12S ribosomal RNA (12S mt-rRNA) and 30 different proteins. The 39S large subunit contains a 16S rRNA (16S mt-rRNA), a copy of mitochondrial valine transfer RNA (mt-tRNA(Val)), which plays an integral structural role, and 52 different proteins. mL53 is located at the L7/L12 stalk.

It is found in the mitochondrion. This Homo sapiens (Human) protein is Large ribosomal subunit protein mL53 (MRPL53).